A 606-amino-acid polypeptide reads, in one-letter code: NADH-ubiquinone oxidoreductase chain 5 (606 aa).

The next 16 helical transmembrane spans lie at 3–23, 35–55, 87–107, 117–137, 140–160, 171–191, 211–233, 241–261, 273–293, 301–320, 325–347, 366–386, 402–422, 457–477, 488–508, and 582–602; these read LFTS…LMSL, YVKT…LIFI, MIFT…SMWY, FFKY…ANNL, LFIG…WWYG, AILY…WFLF, LPLL…HPWL, TPVS…FLLI, MQTL…ICAL, IIAF…IGIN, AFLH…GSII, LPFT…TPFL, SYTN…TAVY, LLIG…PMTI, LTAL…SLMT, and GLIK…MLLF.

Belongs to the complex I subunit 5 family. As to quaternary structure, core subunit of respiratory chain NADH dehydrogenase (Complex I) which is composed of 45 different subunits.

The protein resides in the mitochondrion inner membrane. It catalyses the reaction a ubiquinone + NADH + 5 H(+)(in) = a ubiquinol + NAD(+) + 4 H(+)(out). Its function is as follows. Core subunit of the mitochondrial membrane respiratory chain NADH dehydrogenase (Complex I) which catalyzes electron transfer from NADH through the respiratory chain, using ubiquinone as an electron acceptor. Essential for the catalytic activity and assembly of complex I. The protein is NADH-ubiquinone oxidoreductase chain 5 (MT-ND5) of Pseudosoriculus fumidus (Taiwanese brown-toothed shrew).